A 374-amino-acid polypeptide reads, in one-letter code: MAASAAAAELQASGGPRHPVCLLVLGMAGSGKTTFVQRLTGHLHAQGTPPYVINLDPAVHEVPFPANIDIRDTVKYKEVMKQYGLGPNGGIVTSLNLFATRFDQVMKFIEKAQNMSKYVLIDTPGQIEVFTWSASGTIITEALASSFPTVVIYVMDTSRSTNPVTFMSNMLYACSILYKTKLPFIVVMNKTDIIDHSFAVEWMQDFEAFQDALNQETTYVSNLTRSMSLVLDEFYSSLRVVGVSAVLGTGLDELFVQVTSAAEEYEREYRPEYERLKKSLANAESQQQREQLERLRKDMGSVALDAGTAKDSLSPVLHPSDLILTRGTLDEEDEEADSDTDDIDHRVTEESHEEPAFQNFMQESMAQYWKRNNK.

A2 is modified (N-acetylalanine). 29–34 serves as a coordination point for GTP; the sequence is GSGKTT. The short motif at 86-88 is the Gly-Pro-Asn (GPN)-loop; involved in dimer interface element; that stretch reads GPN. 189 to 192 contributes to the GTP binding site; that stretch reads NKTD. S301, S312, and S314 each carry phosphoserine. The tract at residues 326 to 354 is disordered; that stretch reads RGTLDEEDEEADSDTDDIDHRVTEESHEE. The residue at position 328 (T328) is a Phosphothreonine. Acidic residues predominate over residues 330 to 342; it reads DEEDEEADSDTDD. S338 is modified (phosphoserine). Phosphothreonine is present on T340. Positions 343–354 are enriched in basic and acidic residues; that stretch reads IDHRVTEESHEE.

Belongs to the GPN-loop GTPase family. Heterodimer with GPN3. Binds to RNA polymerase II (RNAPII). Interacts directly with RNAPII subunits RPB4 and RPB7 and the CTD of RPB1. Interacts with XPA. In terms of tissue distribution, expressed ubiquitously.

It localises to the cytoplasm. The protein localises to the nucleus. Small GTPase required for proper nuclear import of RNA polymerase II (RNAPII). May act at an RNAP assembly step prior to nuclear import. Forms an interface between the RNA polymerase II enzyme and chaperone/scaffolding proteins, suggesting that it is required to connect RNA polymerase II to regulators of protein complex formation. May be involved in nuclear localization of XPA. This Homo sapiens (Human) protein is GPN-loop GTPase 1.